The primary structure comprises 181 residues: Adenine phosphoribosyltransferase (181 aa).

The protein belongs to the purine/pyrimidine phosphoribosyltransferase family. As to quaternary structure, homodimer.

The protein resides in the cytoplasm. It catalyses the reaction AMP + diphosphate = 5-phospho-alpha-D-ribose 1-diphosphate + adenine. It participates in purine metabolism; AMP biosynthesis via salvage pathway; AMP from adenine: step 1/1. Its function is as follows. Catalyzes a salvage reaction resulting in the formation of AMP, that is energically less costly than de novo synthesis. This chain is Adenine phosphoribosyltransferase, found in Brucella abortus (strain S19).